The following is a 413-amino-acid chain: MPTIYRRKTPVVRIGDVWVGSDAPVVVQSMTNTDTADVDSTIKQCIALARAGSELIRVTVNNDDAAKGVPHLVDGLAKIGIHTPIIGDFHYNGHILLKKYPDCAKALAKYRINPGNVSIGRKDDDNFKAMVDVAVENQKPVRIGVNWGSLDQQLLAKMMDQNAKLAEPKEARDVMMEAMIVSALNSAAIAERYGLRKDQIILSAKVSGVQDLIDVYRDLAKRCDYVLHLGLTEAGMGAKGVVASTAGLSVLLLEGIGDTIRVSLTPKPNGDRTEEVLVAQQILQSMAIRSFTPQVTACPGCGRTTSTFFQELAERIQNYIREQMPQWKTRYTGVEEMKVAVMGCVVNGPGESKHANIGISLPGTFEEPKAPVYVDGRLMTTLKGDKIVEEFTTILNEYVDNRYAKKAEEAVGV.

4 residues coordinate [4Fe-4S] cluster: cysteine 298, cysteine 301, cysteine 344, and glutamate 351.

Belongs to the IspG family. [4Fe-4S] cluster is required as a cofactor.

It carries out the reaction (2E)-4-hydroxy-3-methylbut-2-enyl diphosphate + oxidized [flavodoxin] + H2O + 2 H(+) = 2-C-methyl-D-erythritol 2,4-cyclic diphosphate + reduced [flavodoxin]. The protein operates within isoprenoid biosynthesis; isopentenyl diphosphate biosynthesis via DXP pathway; isopentenyl diphosphate from 1-deoxy-D-xylulose 5-phosphate: step 5/6. Converts 2C-methyl-D-erythritol 2,4-cyclodiphosphate (ME-2,4cPP) into 1-hydroxy-2-methyl-2-(E)-butenyl 4-diphosphate. This chain is 4-hydroxy-3-methylbut-2-en-1-yl diphosphate synthase (flavodoxin), found in Koribacter versatilis (strain Ellin345).